The following is a 311-amino-acid chain: Putative ankyrin repeat protein RF_0923 (311 aa).

5 ANK repeats span residues I42 to I71, N77 to I106, N112 to I141, N147 to I176, and K182 to H213.

In Rickettsia felis (strain ATCC VR-1525 / URRWXCal2) (Rickettsia azadi), this protein is Putative ankyrin repeat protein RF_0923.